The following is a 364-amino-acid chain: MTTPPPQLASAQNPSGDTPTWAMILGRLTTGQGLAPGQTAWAMDQIMTGTATPAQIAAFAVSMKMKRPTSAEVTELADIMLKHARRVPTDVIGTATVDIVGTGGDGANTVNLSTMAAIVVAAAGVPVVKHGNRAASSLSGGADTLEALGLRIDLGPDEVARCVAEVGIGFAFAPQFHPSYRHAGAVRREIGVPTVFNLLGPLTNPASPRAGLIGCAWADLAEVMAGVFATRGSSVLVVHGDDGLDELTTTTTSTIWRVQAGTVERLTFDPAAFGFARAHVSELTGGDAESNAASARAVLGGAKGPVRDAVVLNAAGALVAHAGLSSDAKWVPAWESGLARAKDAIDSGAAEQLLARWVRFTQQL.

5-phospho-alpha-D-ribose 1-diphosphate-binding positions include Gly-101, 104 to 105 (GD), Thr-109, 111 to 114 (NLST), 129 to 137 (KHGNRAASS), and Gly-141. Gly-101 lines the anthranilate pocket. Ser-113 contributes to the Mg(2+) binding site. Position 132 (Asn-132) interacts with anthranilate. Arg-187 serves as a coordination point for anthranilate. Residues Asp-245 and Glu-246 each contribute to the Mg(2+) site.

It belongs to the anthranilate phosphoribosyltransferase family. As to quaternary structure, homodimer. It depends on Mg(2+) as a cofactor.

The catalysed reaction is N-(5-phospho-beta-D-ribosyl)anthranilate + diphosphate = 5-phospho-alpha-D-ribose 1-diphosphate + anthranilate. It functions in the pathway amino-acid biosynthesis; L-tryptophan biosynthesis; L-tryptophan from chorismate: step 2/5. Functionally, catalyzes the transfer of the phosphoribosyl group of 5-phosphorylribose-1-pyrophosphate (PRPP) to anthranilate to yield N-(5'-phosphoribosyl)-anthranilate (PRA). In Mycolicibacterium vanbaalenii (strain DSM 7251 / JCM 13017 / BCRC 16820 / KCTC 9966 / NRRL B-24157 / PYR-1) (Mycobacterium vanbaalenii), this protein is Anthranilate phosphoribosyltransferase.